We begin with the raw amino-acid sequence, 188 residues long: Elongation factor P (188 aa).

Belongs to the elongation factor P family.

It localises to the cytoplasm. It functions in the pathway protein biosynthesis; polypeptide chain elongation. Involved in peptide bond synthesis. Stimulates efficient translation and peptide-bond synthesis on native or reconstituted 70S ribosomes in vitro. Probably functions indirectly by altering the affinity of the ribosome for aminoacyl-tRNA, thus increasing their reactivity as acceptors for peptidyl transferase. The protein is Elongation factor P of Anaplasma phagocytophilum (strain HZ).